We begin with the raw amino-acid sequence, 647 residues long: DNA mismatch repair protein MutL (647 aa).

The protein belongs to the DNA mismatch repair MutL/HexB family.

Its function is as follows. This protein is involved in the repair of mismatches in DNA. It is required for dam-dependent methyl-directed DNA mismatch repair. May act as a 'molecular matchmaker', a protein that promotes the formation of a stable complex between two or more DNA-binding proteins in an ATP-dependent manner without itself being part of a final effector complex. This chain is DNA mismatch repair protein MutL, found in Bacillus thuringiensis subsp. konkukian (strain 97-27).